Consider the following 511-residue polypeptide: MHYRDLRDFIAALETRGELKRVGQPVSPRLEMTDLCDRTLRAEGPALLFEAPQTGNTRYASPVLGNLFGTPRRVALGMGAENVSALRDIGQLLAMLKEPEPPKGLRDAWDKFPLYKKVLDMAPKTIRRAPVQEVVEEGPEVDLARLPVWHCWPGDVAPLITWGLTVTRGPAKKRQNLGIYRQQVISRNQVIMRWLAHRGGALDFRDWRRTRPGEPFPVSVVLGCDPATILGAVTPVPDTLSEYQFAGLLRGSRTELTQSLGNDLQVPAFAEIVLEGHLSPCEAGFSGVSEHGIPLKEIDGYLHALEGPYGDHTGYYNEQDWFPVFTIDRLTRRPDAIYHSTYTGKPIDEPAVLGVALNEVFVPILQKQFPEIVDFYLPPEGCSYRMAVVSIRKQYAGHAKRVMMGCWSFLRQFMYTKFIVVVDDDIDTRDWKEVMWAITTRMDPVRDTVLVENTPIDYLDFASPVSGLGGKMGMDATNKWPGETDREWGRPIVKDAAVAARVDQLWQTLGL.

Asparagine 176 contributes to the Mn(2+) binding site. Prenylated FMN is bound by residues 179-181 (IYR), 193-195 (RWL), and 198-199 (RG). Glutamate 242 is a Mn(2+) binding site. The Proton donor role is filled by aspartate 311.

This sequence belongs to the UbiD family. In terms of assembly, homohexamer. The cofactor is prenylated FMN. Requires Mn(2+) as cofactor.

It is found in the cell membrane. The enzyme catalyses a 4-hydroxy-3-(all-trans-polyprenyl)benzoate + H(+) = a 2-(all-trans-polyprenyl)phenol + CO2. It participates in cofactor biosynthesis; ubiquinone biosynthesis. In terms of biological role, catalyzes the decarboxylation of 3-octaprenyl-4-hydroxy benzoate to 2-octaprenylphenol, an intermediate step in ubiquinone biosynthesis. The polypeptide is 3-octaprenyl-4-hydroxybenzoate carboxy-lyase (Laribacter hongkongensis (strain HLHK9)).